The chain runs to 248 residues: Undecaprenyl-diphosphatase (248 aa).

Transmembrane regions (helical) follow at residues 4-24 (IVLGLIQGLTEFLPISSSGHL), 40-60 (FAFLHLATLAAIIVFVWKEIV), 74-94 (YSLVLKIIISTIPAAIFGFLF), 101-121 (SFSNLKIISFFFLVTAASLFV), 134-154 (ISYIDALIIGLFQMIAIFPGI), 174-194 (ALKYSFLMGIPVILGAGILET), 201-221 (SYILISGLVAFLSGLLSLLIL), and 228-248 (KKLKIFSYYCILIAIIAFFVG).

Belongs to the UppP family.

Its subcellular location is the cell inner membrane. It carries out the reaction di-trans,octa-cis-undecaprenyl diphosphate + H2O = di-trans,octa-cis-undecaprenyl phosphate + phosphate + H(+). Catalyzes the dephosphorylation of undecaprenyl diphosphate (UPP). Confers resistance to bacitracin. The protein is Undecaprenyl-diphosphatase of Thermosipho africanus (strain TCF52B).